Consider the following 417-residue polypeptide: UDP-N-acetylglucosamine 1-carboxyvinyltransferase (417 aa).

22-23 (KN) contacts phosphoenolpyruvate. A UDP-N-acetyl-alpha-D-glucosamine-binding site is contributed by arginine 93. Cysteine 117 serves as the catalytic Proton donor. Position 117 is a 2-(S-cysteinyl)pyruvic acid O-phosphothioketal (cysteine 117). UDP-N-acetyl-alpha-D-glucosamine contacts are provided by residues 122–126 (RPVDQ), aspartate 304, and isoleucine 326.

This sequence belongs to the EPSP synthase family. MurA subfamily.

The protein resides in the cytoplasm. It carries out the reaction phosphoenolpyruvate + UDP-N-acetyl-alpha-D-glucosamine = UDP-N-acetyl-3-O-(1-carboxyvinyl)-alpha-D-glucosamine + phosphate. It participates in cell wall biogenesis; peptidoglycan biosynthesis. In terms of biological role, cell wall formation. Adds enolpyruvyl to UDP-N-acetylglucosamine. This is UDP-N-acetylglucosamine 1-carboxyvinyltransferase from Laribacter hongkongensis (strain HLHK9).